Consider the following 1493-residue polypeptide: Protein Shroom4 (1493 aa).

Residues 10-92 (YVPVQLQGGA…ILKLIVRRRN (83 aa)) enclose the PDZ domain. Residues 202 to 282 (CALSLRPEEP…PPQPPVRRDS (81 aa)) form a disordered region. 2 stretches are compositionally biased toward polar residues: residues 234 to 243 (AETSGGSRRT) and 249 to 262 (TPSSQMSSRPQEGY). Phosphoserine is present on S411. Residues 430-695 (GSKGMELPPV…SPGQRPGQSS (266 aa)) are disordered. Composition is skewed to basic and acidic residues over residues 470-484 (QSSKERKTRQVDDRS) and 498-509 (GEADGHPSEKGF). The segment covering 513–547 (NRTSRAASELANQQPSASGSLVQQATDCSSTTKAA) has biased composition (polar residues). The residue at position 729 (S729) is a Phosphoserine. Disordered stretches follow at residues 740 to 759 (AAMEGPSNPGDNKELKASTA) and 781 to 813 (SKSLSTSHLPGLTTHSNKTFTQRPKPIDQNFQP). Residues 782 to 802 (KSLSTSHLPGLTTHSNKTFTQ) show a composition bias toward polar residues. Position 1019 is a phosphoserine (S1019). Disordered stretches follow at residues 1117 to 1170 (AAQQ…ETSG), 1187 to 1206 (SFGHLEGSRQGSQSVPAEQE), 1214 to 1236 (DFLPPIRGHLGSQPEQAQPPCYY), and 1246 to 1265 (GQEATESAKQEFQHFSPPSG). Residues 1118 to 1129 (AQQQKQQQQQQK) are compositionally biased toward low complexity. Acidic residues predominate over residues 1132–1159 (EEEEEEEEEEEEEEEEEEEEAEEEEEEL). The ASD2 domain maps to 1213 to 1492 (SDFLPPIRGH…RESLLLGPSN (280 aa)). The stretch at 1382-1488 (LSGRLARVEN…LKCLRESLLL (107 aa)) forms a coiled coil.

This sequence belongs to the shroom family. As to quaternary structure, interacts directly with F-actin. As to expression, expressed in all fetal and adult tissues investigated. Expressed in adult heart, brain, placenta, lung, liver, skeletal muscle, kidney and pancreas. In brain regions detected in cerebellum, cerebral cortex, medulla, spinal cord, occipital pole, frontal lobe, temporal lobe and putamen. The expression is strongest in the medulla and weakest in the cerebral cortex.

It localises to the cytoplasm. Its subcellular location is the cytoskeleton. In terms of biological role, probable regulator of cytoskeletal architecture that plays an important role in development. May regulate cellular and cytoskeletal architecture by modulating the spatial distribution of myosin II. This chain is Protein Shroom4 (SHROOM4), found in Homo sapiens (Human).